The primary structure comprises 323 residues: Aspartate carbamoyltransferase catalytic subunit (323 aa).

The carbamoyl phosphate site is built by arginine 55 and threonine 56. Residue lysine 83 coordinates L-aspartate. Positions 105, 133, and 136 each coordinate carbamoyl phosphate. The L-aspartate site is built by arginine 166 and arginine 220. Residues glycine 261 and proline 262 each contribute to the carbamoyl phosphate site.

The protein belongs to the aspartate/ornithine carbamoyltransferase superfamily. ATCase family. In terms of assembly, heterododecamer (2C3:3R2) of six catalytic PyrB chains organized as two trimers (C3), and six regulatory PyrI chains organized as three dimers (R2).

The enzyme catalyses carbamoyl phosphate + L-aspartate = N-carbamoyl-L-aspartate + phosphate + H(+). It participates in pyrimidine metabolism; UMP biosynthesis via de novo pathway; (S)-dihydroorotate from bicarbonate: step 2/3. Functionally, catalyzes the condensation of carbamoyl phosphate and aspartate to form carbamoyl aspartate and inorganic phosphate, the committed step in the de novo pyrimidine nucleotide biosynthesis pathway. This Acidothermus cellulolyticus (strain ATCC 43068 / DSM 8971 / 11B) protein is Aspartate carbamoyltransferase catalytic subunit.